Here is an 89-residue protein sequence, read N- to C-terminus: Small ribosomal subunit protein uS15 (89 aa).

It belongs to the universal ribosomal protein uS15 family. In terms of assembly, part of the 30S ribosomal subunit. Forms a bridge to the 50S subunit in the 70S ribosome, contacting the 23S rRNA.

In terms of biological role, one of the primary rRNA binding proteins, it binds directly to 16S rRNA where it helps nucleate assembly of the platform of the 30S subunit by binding and bridging several RNA helices of the 16S rRNA. Forms an intersubunit bridge (bridge B4) with the 23S rRNA of the 50S subunit in the ribosome. This chain is Small ribosomal subunit protein uS15, found in Laribacter hongkongensis (strain HLHK9).